Consider the following 428-residue polypeptide: C4-dicarboxylate transport protein (428 aa).

A run of 9 helical transmembrane segments spans residues Ser8–Pro28, Leu44–Met64, Val76–Val96, Ile142–Phe162, Val184–Met204, Leu222–Ala242, Val289–Leu309, Ile326–Val346, and Ile352–Ile372.

This sequence belongs to the dicarboxylate/amino acid:cation symporter (DAACS) (TC 2.A.23) family.

The protein localises to the cell inner membrane. Its function is as follows. Responsible for the transport of dicarboxylates such as succinate, fumarate, and malate from the periplasm across the membrane. The sequence is that of C4-dicarboxylate transport protein from Klebsiella pneumoniae (strain 342).